We begin with the raw amino-acid sequence, 296 residues long: MSLFDRLFILSQHLTPQHALSRAIGKLADSRTPFIKNTFIKWFIKRYNVNMQEALLPSAEDYTCFNDFFTRALKDGARPIHPDVSRLVTPVDGAVSQAGSIDYGKIFQAKGHSFSLVELLGGDLQRAQPFIGGEFATIYLSPKDYHRIHMPIDGELREMIFVPGKLYSVNPLTTENVPALFARNERVVCIFDTPLGPMSMTLVGAMIVASVETIWAGRVAPMSKTVRSYTYKPGEVTIKRGEEMGRFCLGSTVVMTFPKGAMRWREGLKAETPVRLGEDLGKILQTVATVDEQKTD.

Residues Asp-92, His-149, and Ser-251 each act as charge relay system; for autoendoproteolytic cleavage activity in the active site. The active-site Schiff-base intermediate with substrate; via pyruvic acid; for decarboxylase activity is the Ser-251. Ser-251 is modified (pyruvic acid (Ser); by autocatalysis).

The protein belongs to the phosphatidylserine decarboxylase family. PSD-B subfamily. Prokaryotic type I sub-subfamily. Heterodimer of a large membrane-associated beta subunit and a small pyruvoyl-containing alpha subunit. Pyruvate is required as a cofactor. In terms of processing, is synthesized initially as an inactive proenzyme. Formation of the active enzyme involves a self-maturation process in which the active site pyruvoyl group is generated from an internal serine residue via an autocatalytic post-translational modification. Two non-identical subunits are generated from the proenzyme in this reaction, and the pyruvate is formed at the N-terminus of the alpha chain, which is derived from the carboxyl end of the proenzyme. The autoendoproteolytic cleavage occurs by a canonical serine protease mechanism, in which the side chain hydroxyl group of the serine supplies its oxygen atom to form the C-terminus of the beta chain, while the remainder of the serine residue undergoes an oxidative deamination to produce ammonia and the pyruvoyl prosthetic group on the alpha chain. During this reaction, the Ser that is part of the protease active site of the proenzyme becomes the pyruvoyl prosthetic group, which constitutes an essential element of the active site of the mature decarboxylase.

It localises to the cell membrane. It carries out the reaction a 1,2-diacyl-sn-glycero-3-phospho-L-serine + H(+) = a 1,2-diacyl-sn-glycero-3-phosphoethanolamine + CO2. Its pathway is phospholipid metabolism; phosphatidylethanolamine biosynthesis; phosphatidylethanolamine from CDP-diacylglycerol: step 2/2. In terms of biological role, catalyzes the formation of phosphatidylethanolamine (PtdEtn) from phosphatidylserine (PtdSer). This is Phosphatidylserine decarboxylase proenzyme from Hahella chejuensis (strain KCTC 2396).